We begin with the raw amino-acid sequence, 364 residues long: Paraneoplastic antigen Ma2 (364 aa).

Residue Ala-2 is modified to N-acetylalanine. The segment covering 335–351 (EEEEASFENESIEEPEE) has biased composition (acidic residues). The segment at 335 to 364 (EEEEASFENESIEEPEERDGYGRWNHEGDD) is disordered. Residues 352-364 (RDGYGRWNHEGDD) show a composition bias toward basic and acidic residues.

Belongs to the PNMA family. As to expression, brain-specific. In some cancer patients, specifically expressed by testicular tumor cells.

Its subcellular location is the nucleus. The protein resides in the nucleolus. This Homo sapiens (Human) protein is Paraneoplastic antigen Ma2 (PNMA2).